We begin with the raw amino-acid sequence, 359 residues long: 4-hydroxy-3-methylbut-2-en-1-yl diphosphate synthase (flavodoxin) (359 aa).

[4Fe-4S] cluster is bound by residues Cys264, Cys267, Cys299, and Glu306.

It belongs to the IspG family. [4Fe-4S] cluster is required as a cofactor.

The enzyme catalyses (2E)-4-hydroxy-3-methylbut-2-enyl diphosphate + oxidized [flavodoxin] + H2O + 2 H(+) = 2-C-methyl-D-erythritol 2,4-cyclic diphosphate + reduced [flavodoxin]. It functions in the pathway isoprenoid biosynthesis; isopentenyl diphosphate biosynthesis via DXP pathway; isopentenyl diphosphate from 1-deoxy-D-xylulose 5-phosphate: step 5/6. Converts 2C-methyl-D-erythritol 2,4-cyclodiphosphate (ME-2,4cPP) into 1-hydroxy-2-methyl-2-(E)-butenyl 4-diphosphate. This Helicobacter pylori (strain HPAG1) protein is 4-hydroxy-3-methylbut-2-en-1-yl diphosphate synthase (flavodoxin).